The sequence spans 687 residues: Translation initiation factor IF-2 (687 aa).

The region spanning 186 to 355 (KRPPIVTVMG…LLTAEMLELK (170 aa)) is the tr-type G domain. Residues 195 to 202 (GHVDHGKT) are G1. Residue 195–202 (GHVDHGKT) participates in GTP binding. Residues 220–224 (GITQH) are G2. The interval 241-244 (DTPG) is G3. GTP-binding positions include 241-245 (DTPGH) and 295-298 (NKID). Residues 295–298 (NKID) form a G4 region. Positions 331–333 (SAK) are G5.

This sequence belongs to the TRAFAC class translation factor GTPase superfamily. Classic translation factor GTPase family. IF-2 subfamily.

The protein resides in the cytoplasm. Functionally, one of the essential components for the initiation of protein synthesis. Protects formylmethionyl-tRNA from spontaneous hydrolysis and promotes its binding to the 30S ribosomal subunits. Also involved in the hydrolysis of GTP during the formation of the 70S ribosomal complex. This Clostridium botulinum (strain Alaska E43 / Type E3) protein is Translation initiation factor IF-2.